A 254-amino-acid chain; its full sequence is DNA repair protein RecO (254 aa).

Belongs to the RecO family.

Its function is as follows. Involved in DNA repair and RecF pathway recombination. This is DNA repair protein RecO from Anaeromyxobacter dehalogenans (strain 2CP-1 / ATCC BAA-258).